The primary structure comprises 277 residues: Thiazole synthase (277 aa).

The active-site Schiff-base intermediate with DXP is the Lys-107. 1-deoxy-D-xylulose 5-phosphate is bound by residues Gly-168, 194-195 (AG), and 216-217 (AS).

This sequence belongs to the ThiG family. In terms of assembly, homotetramer. Forms heterodimers with either ThiH or ThiS.

It is found in the cytoplasm. It catalyses the reaction [ThiS sulfur-carrier protein]-C-terminal-Gly-aminoethanethioate + 2-iminoacetate + 1-deoxy-D-xylulose 5-phosphate = [ThiS sulfur-carrier protein]-C-terminal Gly-Gly + 2-[(2R,5Z)-2-carboxy-4-methylthiazol-5(2H)-ylidene]ethyl phosphate + 2 H2O + H(+). It participates in cofactor biosynthesis; thiamine diphosphate biosynthesis. Functionally, catalyzes the rearrangement of 1-deoxy-D-xylulose 5-phosphate (DXP) to produce the thiazole phosphate moiety of thiamine. Sulfur is provided by the thiocarboxylate moiety of the carrier protein ThiS. In vitro, sulfur can be provided by H(2)S. The sequence is that of Thiazole synthase from Cutibacterium acnes (strain DSM 16379 / KPA171202) (Propionibacterium acnes).